The primary structure comprises 159 residues: Ribosomal RNA large subunit methyltransferase H (159 aa).

S-adenosyl-L-methionine-binding positions include leucine 76, glycine 108, and 127–132 (FGLLTF).

It belongs to the RNA methyltransferase RlmH family. As to quaternary structure, homodimer.

Its subcellular location is the cytoplasm. The catalysed reaction is pseudouridine(1915) in 23S rRNA + S-adenosyl-L-methionine = N(3)-methylpseudouridine(1915) in 23S rRNA + S-adenosyl-L-homocysteine + H(+). Its function is as follows. Specifically methylates the pseudouridine at position 1915 (m3Psi1915) in 23S rRNA. The protein is Ribosomal RNA large subunit methyltransferase H of Streptococcus thermophilus (strain CNRZ 1066).